The following is a 201-amino-acid chain: Kunitz type trypsin inhibitor 104 (201 aa).

The signal sequence occupies residues methionine 1–alanine 24. Cystine bridges form between cysteine 63–cysteine 110, cysteine 161–cysteine 173, and cysteine 166–cysteine 169.

The protein belongs to the protease inhibitor I3 (leguminous Kunitz-type inhibitor) family. Interacts with CP.

The protein localises to the secreted. Its subcellular location is the extracellular space. It localises to the apoplast. In terms of biological role, protease inhibitor involved in the control of mycorrhiza establishment and arbuscule development during root colonization by arbuscular mycorrhizal (AM) fungi (e.g. Rhizophagus irregularis). This Medicago truncatula (Barrel medic) protein is Kunitz type trypsin inhibitor 104.